The following is a 102-amino-acid chain: ATP-dependent Clp protease adapter protein ClpS (102 aa).

The protein belongs to the ClpS family. Binds to the N-terminal domain of the chaperone ClpA.

Involved in the modulation of the specificity of the ClpAP-mediated ATP-dependent protein degradation. This is ATP-dependent Clp protease adapter protein ClpS from Shewanella loihica (strain ATCC BAA-1088 / PV-4).